The primary structure comprises 318 residues: Transaldolase (318 aa).

Lys132 (schiff-base intermediate with substrate) is an active-site residue.

Belongs to the transaldolase family. Type 1 subfamily. As to quaternary structure, homodimer.

Its subcellular location is the cytoplasm. The catalysed reaction is D-sedoheptulose 7-phosphate + D-glyceraldehyde 3-phosphate = D-erythrose 4-phosphate + beta-D-fructose 6-phosphate. It functions in the pathway carbohydrate degradation; pentose phosphate pathway; D-glyceraldehyde 3-phosphate and beta-D-fructose 6-phosphate from D-ribose 5-phosphate and D-xylulose 5-phosphate (non-oxidative stage): step 2/3. Its function is as follows. Transaldolase is important for the balance of metabolites in the pentose-phosphate pathway. In Hamiltonella defensa subsp. Acyrthosiphon pisum (strain 5AT), this protein is Transaldolase.